Reading from the N-terminus, the 602-residue chain is (R)-limonene synthase (602 aa).

The Mg(2+) site is built by D356, D360, D500, T504, and E508. Positions 356-360 (DDVYD) match the DDXXD motif motif.

The protein belongs to the terpene synthase family. Mg(2+) serves as cofactor. Requires Mn(2+) as cofactor.

The enzyme catalyses (2E)-geranyl diphosphate = (4R)-limonene + diphosphate. Catalyzes the formation of (R)-(+)-limonene, terpinolene, (1R,5S)-(+)-camphene, (1R,5R)-(+)-alpha-pinene, beta-myrcene and traces of alpha-phellandrene. The chain is (R)-limonene synthase from Lavandula angustifolia (Lavender).